Consider the following 78-residue polypeptide: MNPIVEFCLSNMAKGGDYVFNQLENDPDVDVLEYGCLTHCGICSAGLYALVNGDIVEGDSPEELLQNIYAHIKETWIF.

Belongs to the UPF0349 family.

The protein is UPF0349 protein SAHV_0934 of Staphylococcus aureus (strain Mu3 / ATCC 700698).